We begin with the raw amino-acid sequence, 157 residues long: Small ribosomal subunit protein uS7 (157 aa).

It belongs to the universal ribosomal protein uS7 family. In terms of assembly, part of the 30S ribosomal subunit. Contacts proteins S9 and S11.

Its function is as follows. One of the primary rRNA binding proteins, it binds directly to 16S rRNA where it nucleates assembly of the head domain of the 30S subunit. Is located at the subunit interface close to the decoding center, probably blocks exit of the E-site tRNA. This chain is Small ribosomal subunit protein uS7, found in Chlamydia trachomatis serovar L2 (strain ATCC VR-902B / DSM 19102 / 434/Bu).